Consider the following 206-residue polypeptide: Protein tyrosine phosphatase receptor type C-associated protein (206 aa).

Residues 34–54 form a helical membrane-spanning segment; the sequence is VTVVLLLLLLLLLATGLALAW. Positions 98 to 173 are disordered; sequence GSTDNDLERQ…PGPASAGGSA (76 aa). A phosphoserine mark is found at Ser99 and Ser153. Positions 161–173 are enriched in low complexity; the sequence is LGSPGPASAGGSA.

Interacts with CD45/PTPRC. Post-translationally, phosphorylated on tyrosine residues.

The protein resides in the membrane. In Homo sapiens (Human), this protein is Protein tyrosine phosphatase receptor type C-associated protein (PTPRCAP).